The chain runs to 230 residues: Orotidine 5'-phosphate decarboxylase (230 aa).

Substrate contacts are provided by residues Asp-10, Lys-31, 58 to 67, Thr-117, Arg-179, Gln-188, Gly-208, and Arg-209; that span reads DLKLHDIPNT. Lys-60 (proton donor) is an active-site residue.

Belongs to the OMP decarboxylase family. Type 1 subfamily. In terms of assembly, homodimer.

The enzyme catalyses orotidine 5'-phosphate + H(+) = UMP + CO2. It participates in pyrimidine metabolism; UMP biosynthesis via de novo pathway; UMP from orotate: step 2/2. Its function is as follows. Catalyzes the decarboxylation of orotidine 5'-monophosphate (OMP) to uridine 5'-monophosphate (UMP). The polypeptide is Orotidine 5'-phosphate decarboxylase (Staphylococcus epidermidis (strain ATCC 12228 / FDA PCI 1200)).